Reading from the N-terminus, the 251-residue chain is uncharacterized protein (251 aa).

It belongs to the methyltransferase superfamily.

Its subcellular location is the cytoplasm. It localises to the nucleus. Probable methyltransferase. This is an uncharacterized protein from Schizosaccharomyces pombe (strain 972 / ATCC 24843) (Fission yeast).